Reading from the N-terminus, the 272-residue chain is Prohibitin 1 (272 aa).

A coiled-coil region spans residues 177–211; it reads KEFTEAVEMKQVAQQEAERARFIVEKAEQQKKAAV.

In terms of assembly, the mitochondrial prohibitin complex consists of two subunits (PHB1 and PHB2), assembled into a membrane-associated ring-shaped supercomplex of approximately 1 mDa.

Its subcellular location is the mitochondrion inner membrane. It is found in the nucleus. The protein localises to the cytoplasm. It localises to the cell membrane. Protein with pleiotropic attributes mediated in a cell-compartment- and tissue-specific manner, which include the plasma membrane-associated cell signaling functions, mitochondrial chaperone, and transcriptional co-regulator of transcription factors in the nucleus. Functionally, in the mitochondria, together with PHB2, forms large ring complexes (prohibitin complexes) in the inner mitochondrial membrane (IMM) and functions as a chaperone protein that stabilizes mitochondrial respiratory enzymes and maintains mitochondrial integrity in the IMM, which is required for mitochondrial morphogenesis, neuronal survival, and normal lifespan. In terms of biological role, in the nucleus, acts as a transcription coregulator, enhances promoter binding by TP53, a transcription factor it activates, but reduces the promoter binding by E2F1, a transcription factor it represses. Its function is as follows. In the plasma membrane, cooperates with CD86 to mediate CD86-signaling in B lymphocytes that regulates the level of IgG1 produced through the activation of distal signaling intermediates. Upon CD40 engagement, required to activate NF-kappa-B signaling pathway via phospholipase C and protein kinase C activation. The protein is Prohibitin 1 (PHB1) of Gallus gallus (Chicken).